The primary structure comprises 354 residues: Uroporphyrinogen decarboxylase (354 aa).

Substrate is bound by residues 27–31 (RQAGR), Phe46, Asp77, Tyr154, Ser209, and His327.

The protein belongs to the uroporphyrinogen decarboxylase family. As to quaternary structure, homodimer.

Its subcellular location is the cytoplasm. It carries out the reaction uroporphyrinogen III + 4 H(+) = coproporphyrinogen III + 4 CO2. It functions in the pathway porphyrin-containing compound metabolism; protoporphyrin-IX biosynthesis; coproporphyrinogen-III from 5-aminolevulinate: step 4/4. Functionally, catalyzes the decarboxylation of four acetate groups of uroporphyrinogen-III to yield coproporphyrinogen-III. The protein is Uroporphyrinogen decarboxylase of Pseudomonas syringae pv. tomato (strain ATCC BAA-871 / DC3000).